The sequence spans 395 residues: ATP phosphoribosyltransferase regulatory subunit (395 aa).

The protein belongs to the class-II aminoacyl-tRNA synthetase family. HisZ subfamily. Heteromultimer composed of HisG and HisZ subunits.

The protein localises to the cytoplasm. Its pathway is amino-acid biosynthesis; L-histidine biosynthesis; L-histidine from 5-phospho-alpha-D-ribose 1-diphosphate: step 1/9. Its function is as follows. Required for the first step of histidine biosynthesis. May allow the feedback regulation of ATP phosphoribosyltransferase activity by histidine. The polypeptide is ATP phosphoribosyltransferase regulatory subunit (Pseudomonas putida (strain ATCC 700007 / DSM 6899 / JCM 31910 / BCRC 17059 / LMG 24140 / F1)).